Consider the following 369-residue polypeptide: Anhydro-N-acetylmuramic acid kinase (369 aa).

Position 12-19 (12-19 (GTSLDGVD)) interacts with ATP.

The protein belongs to the anhydro-N-acetylmuramic acid kinase family.

The enzyme catalyses 1,6-anhydro-N-acetyl-beta-muramate + ATP + H2O = N-acetyl-D-muramate 6-phosphate + ADP + H(+). It functions in the pathway amino-sugar metabolism; 1,6-anhydro-N-acetylmuramate degradation. It participates in cell wall biogenesis; peptidoglycan recycling. Its function is as follows. Catalyzes the specific phosphorylation of 1,6-anhydro-N-acetylmuramic acid (anhMurNAc) with the simultaneous cleavage of the 1,6-anhydro ring, generating MurNAc-6-P. Is required for the utilization of anhMurNAc either imported from the medium or derived from its own cell wall murein, and thus plays a role in cell wall recycling. This chain is Anhydro-N-acetylmuramic acid kinase, found in Actinobacillus pleuropneumoniae serotype 3 (strain JL03).